The following is a 1258-amino-acid chain: Trafficking protein particle complex subunit 10 (1258 aa).

Ser-707 carries the post-translational modification Phosphoserine. Disordered stretches follow at residues 888–913 (PASG…QRAG) and 1201–1222 (SSLR…GLPM). Over residues 901 to 911 (ELHRKQKDSQR) the composition is skewed to basic and acidic residues. The span at 1201–1214 (SSLRSRGSTHSTSS) shows a compositional bias: low complexity.

It belongs to the TRAPPC10 family. As to quaternary structure, specific component of the multisubunit TRAPP II complex, which includes at least TRAPPC1, TRAPPC2, TRAPPC3, TRAPPC4, TRAPPC5, TRAPPC6A/B, TRAPPC9, TRAPPC10 and TRAPPC14. TRAPPC9, TRAPPC10 and TRAPPC14 are specific subunits of the TRAPP II complex. Interacts with TRAPPC14.

It is found in the golgi apparatus. Its subcellular location is the cis-Golgi network. Specific subunit of the TRAPP (transport protein particle) II complex, a highly conserved vesicle tethering complex that functions in late Golgi trafficking as a membrane tether. This is Trafficking protein particle complex subunit 10 (Trappc10) from Mus musculus (Mouse).